The following is a 352-amino-acid chain: Alanine racemase (352 aa).

Lys34 functions as the Proton acceptor; specific for D-alanine in the catalytic mechanism. Lys34 is subject to N6-(pyridoxal phosphate)lysine. Arg126 provides a ligand contact to substrate. The active-site Proton acceptor; specific for L-alanine is the Tyr248. Residue Met296 participates in substrate binding.

Belongs to the alanine racemase family. Pyridoxal 5'-phosphate is required as a cofactor.

It carries out the reaction L-alanine = D-alanine. It participates in amino-acid biosynthesis; D-alanine biosynthesis; D-alanine from L-alanine: step 1/1. Its function is as follows. Catalyzes the interconversion of L-alanine and D-alanine. May also act on other amino acids. This Deinococcus deserti (strain DSM 17065 / CIP 109153 / LMG 22923 / VCD115) protein is Alanine racemase (alr).